Reading from the N-terminus, the 309-residue chain is UDP-N-acetylenolpyruvoylglucosamine reductase (309 aa).

One can recognise an FAD-binding PCMH-type domain in the interval 34–221 (RVGGPAQVLF…TAAREAAQPI (188 aa)). Residue R179 is part of the active site. S228 (proton donor) is an active-site residue. Residue E298 is part of the active site.

Belongs to the MurB family. Requires FAD as cofactor.

The protein resides in the cytoplasm. It catalyses the reaction UDP-N-acetyl-alpha-D-muramate + NADP(+) = UDP-N-acetyl-3-O-(1-carboxyvinyl)-alpha-D-glucosamine + NADPH + H(+). The protein operates within cell wall biogenesis; peptidoglycan biosynthesis. In terms of biological role, cell wall formation. The sequence is that of UDP-N-acetylenolpyruvoylglucosamine reductase from Methylorubrum extorquens (strain CM4 / NCIMB 13688) (Methylobacterium extorquens).